Consider the following 190-residue polypeptide: Elongation factor P-like protein (190 aa).

It belongs to the elongation factor P family.

The sequence is that of Elongation factor P-like protein from Photorhabdus laumondii subsp. laumondii (strain DSM 15139 / CIP 105565 / TT01) (Photorhabdus luminescens subsp. laumondii).